Consider the following 598-residue polypeptide: Torsin-1A-interacting protein 1 (598 aa).

The Nuclear portion of the chain corresponds to 1 to 351 (MAGEGRRAEA…PQNASFVKRN (351 aa)). Disordered stretches follow at residues 19-254 (VTPR…RSSS) and 267-314 (QNFT…IYGS). Ser-60 carries the post-translational modification Phosphoserine. Basic and acidic residues-rich tracts occupy residues 73–101 (LVDK…EVRE) and 115–124 (RPQEAEEMKT). 6 positions are modified to phosphoserine: Ser-135, Ser-143, Ser-154, Ser-156, Ser-157, and Ser-187. The span at 205-214 (EATSVQQKVN) shows a compositional bias: polar residues. Ser-216 carries the phosphoserine modification. Thr-221 bears the Phosphothreonine mark. A phosphoserine mark is found at Ser-227, Ser-230, and Ser-242. Positions 238-250 (RSRDSDESGDKTT) are enriched in basic and acidic residues. 2 stretches are compositionally biased toward polar residues: residues 277 to 287 (SVLSSGYQKTP) and 300 to 313 (RMQT…SIYG). Ser-320 is subject to Phosphoserine. Positions 322–341 (LKSELGNQSPSTSSQQVTGQ) are disordered. A Glycyl lysine isopeptide (Lys-Gly) (interchain with G-Cter in SUMO2) cross-link involves residue Lys-323. The span at 326–341 (LGNQSPSTSSQQVTGQ) shows a compositional bias: polar residues. The residue at position 330 (Ser-330) is a Phosphoserine. The helical transmembrane segment at 352 to 372 (WWWLLPLIAALASGSFWFFST) threads the bilayer. Residues 371-598 (STPEVETTAV…ENALKRGICL (228 aa)) form an interaction with TOR1A region. Residues 373 to 598 (PEVETTAVQE…ENALKRGICL (226 aa)) lie on the Perinuclear space side of the membrane. The stretch at 374-450 (EVETTAVQEF…SEQIADAYSS (77 aa)) forms a coiled coil. Asn-414 is a glycosylation site (N-linked (GlcNAc...) asparagine).

It belongs to the TOR1AIP family. In terms of assembly, interacts with ATP1B4. Interacts with TOR1A (ATP-bound). Interacts with TOR1B, TOR2A and TOR3A.

Its subcellular location is the nucleus inner membrane. Functionally, required for nuclear membrane integrity. Induces TOR1A and TOR1B ATPase activity and is required for their location on the nuclear membrane. Binds to A- and B-type lamins. Possible role in membrane attachment and assembly of the nuclear lamina. The polypeptide is Torsin-1A-interacting protein 1 (TOR1AIP1) (Pongo abelii (Sumatran orangutan)).